The chain runs to 636 residues: Threonine--tRNA ligase (636 aa).

A TGS domain is found at 1 to 59 (MPIITLPDGTKKIFEQVVSVEQVAKSMGLVKAALAGEVDGELVSTSFLIKTDANLTIIT). The interval 240-531 (DHRKIGKTQD…LIEHYEGAYP (292 aa)) is catalytic. Residues Cys331, His382, and His508 each contribute to the Zn(2+) site.

This sequence belongs to the class-II aminoacyl-tRNA synthetase family. In terms of assembly, homodimer. The cofactor is Zn(2+).

The protein resides in the cytoplasm. It catalyses the reaction tRNA(Thr) + L-threonine + ATP = L-threonyl-tRNA(Thr) + AMP + diphosphate + H(+). Its function is as follows. Catalyzes the attachment of threonine to tRNA(Thr) in a two-step reaction: L-threonine is first activated by ATP to form Thr-AMP and then transferred to the acceptor end of tRNA(Thr). Also edits incorrectly charged L-seryl-tRNA(Thr). The sequence is that of Threonine--tRNA ligase from Vesicomyosocius okutanii subsp. Calyptogena okutanii (strain HA).